The primary structure comprises 163 residues: Interleukin-31 (163 aa).

A signal peptide spans 1 to 23 (MIFHTGTTKPTLVLLCCIGTWLA). Residues Asn55, Asn84, and Asn124 are each glycosylated (N-linked (GlcNAc...) asparagine).

Its subcellular location is the secreted. In terms of biological role, activates STAT3 and possibly STAT1 and STAT5 through the IL31 heterodimeric receptor composed of IL31RA and OSMR. May function in skin immunity. Enhances myeloid progenitor cell survival in vitro. Induces RETNLA and serum amyloid A protein expression in macrophages. The sequence is that of Interleukin-31 (Il31) from Mus musculus (Mouse).